Here is a 358-residue protein sequence, read N- to C-terminus: 3-dehydroquinate synthase (358 aa).

NAD(+) is bound by residues 70 to 75, 104 to 108, 128 to 129, Lys-141, Lys-150, and 168 to 171; these read DGEQFK, GVIGD, TT, and CLHT. Positions 183, 246, and 263 each coordinate Zn(2+).

Belongs to the sugar phosphate cyclases superfamily. Dehydroquinate synthase family. It depends on Co(2+) as a cofactor. Zn(2+) is required as a cofactor. Requires NAD(+) as cofactor.

The protein localises to the cytoplasm. The enzyme catalyses 7-phospho-2-dehydro-3-deoxy-D-arabino-heptonate = 3-dehydroquinate + phosphate. It functions in the pathway metabolic intermediate biosynthesis; chorismate biosynthesis; chorismate from D-erythrose 4-phosphate and phosphoenolpyruvate: step 2/7. In terms of biological role, catalyzes the conversion of 3-deoxy-D-arabino-heptulosonate 7-phosphate (DAHP) to dehydroquinate (DHQ). This is 3-dehydroquinate synthase from Shewanella baltica (strain OS155 / ATCC BAA-1091).